The sequence spans 104 residues: Large ribosomal subunit protein uL24 (104 aa).

The protein belongs to the universal ribosomal protein uL24 family. As to quaternary structure, part of the 50S ribosomal subunit.

One of two assembly initiator proteins, it binds directly to the 5'-end of the 23S rRNA, where it nucleates assembly of the 50S subunit. Its function is as follows. One of the proteins that surrounds the polypeptide exit tunnel on the outside of the subunit. This Corynebacterium kroppenstedtii (strain DSM 44385 / JCM 11950 / CIP 105744 / CCUG 35717) protein is Large ribosomal subunit protein uL24.